The chain runs to 492 residues: Transmembrane protein 104 homolog (492 aa).

The Cytoplasmic portion of the chain corresponds to 1–18 (MQSNTDSSGTSGTYSQTV). A helical membrane pass occupies residues 19-39 (GLLYVFNLIVGTGALALPKAF). Residues 40–45 (QSAGWL) are Extracellular-facing. A helical transmembrane segment spans residues 46–66 (LSISLLTFSAFMSYVAATFVI). At 67–114 (EALSVANAVLSKKRRVEYDDVVVADGPSTFEIAKKVEVSEMASMFLSK) the chain is on the cytoplasmic side. The helical transmembrane segment at 115–135 (VSLVFSYFAIIIYLFGDLAIY) threads the bilayer. Over 136-177 (STTVPKSAMNIVCSTINATIVKSSDPCHESWPEILTRMTVYR) the chain is Extracellular. A glycan (N-linked (GlcNAc...) asparagine) is linked at Asn152. A helical membrane pass occupies residues 178–198 (FFVIVFVVVVCLPMVIAGITK). The Cytoplasmic segment spans residues 199–210 (TRHIQIMTTLSR). Residues 211-231 (WAAFILMISLATMQLSSQGAA) traverse the membrane as a helical segment. Residues 232–238 (AHPPAYN) are Extracellular-facing. The chain crosses the membrane as a helical span at residues 239-259 (FHGFGSLFGCAVYAFMCHHSI). At 260–275 (PSLITPMRTKENVFGK) the chain is on the cytoplasmic side. Residues 276–296 (IAVVYGIVGVFYFTLSLTGAF) form a helical membrane-spanning segment. The Extracellular portion of the chain corresponds to 297-325 (AFEHVQDIYTLNFLHDDNTSLVYSIIDYF). Asn314 carries an N-linked (GlcNAc...) asparagine glycan. A helical transmembrane segment spans residues 326 to 346 (LALFPIITLTSSYPIIALTLI). Topologically, residues 347 to 391 (NNFKVVKDILCPKTGQENESLLEADNQVEDNDTDDEREARNGNPK) are cytoplasmic. Residues 367-382 (LLEADNQVEDNDTDDE) are compositionally biased toward acidic residues. Residues 367 to 387 (LLEADNQVEDNDTDDEREARN) are disordered. Residues 392-412 (TIFDVLVPTLVLALPTFLSLL) traverse the membrane as a helical segment. Residues 413-415 (TDD) are Extracellular-facing. A helical membrane pass occupies residues 416–436 (MLLLASITGSFPGVAVQFAIP). The Cytoplasmic segment spans residues 437–466 (CLLVTAARKHARSVLNFPVPRKNNSPFQSR). A helical membrane pass occupies residues 467–487 (FWIMLISSWAGFSMIMVLLNL). The Extracellular portion of the chain corresponds to 488–492 (VGVKF).

The protein belongs to the TMEM104 family.

It localises to the membrane. This Caenorhabditis briggsae protein is Transmembrane protein 104 homolog.